The primary structure comprises 1136 residues: Coiled-coil domain-containing protein 136 (1136 aa).

The tract at residues 1 to 46 (MQAMDGEVLLPALYEEEEEEEEEEEEVEEEQVEKGGSLGSLSMGKH) is disordered. Residues 14-31 (YEEEEEEEEEEEEVEEEQ) show a composition bias toward acidic residues. A Phosphoserine modification is found at Ser-50. 2 coiled-coil regions span residues 293 to 631 (VMQL…QNQE) and 681 to 730 (LQAL…QTQS). Disordered regions lie at residues 741-773 (GKNSGSRAPSTENFHRSYESSIDENEGYQKSYV), 814-837 (GSVSSGETLHRSYASSSTDEDPAE), 965-990 (NRPSISSEARGKNVNKNMNKNANGVR), and 1040-1111 (KKER…PDPP). Over residues 743–752 (NSGSRAPSTE) the composition is skewed to polar residues. Residues 839-972 (EDLEHFEETV…KENRPSISSE (134 aa)) are a coiled coil. Over residues 976-989 (KNVNKNMNKNANGV) the composition is skewed to low complexity. Residues 1017–1057 (YYKASQRRLDELMKEEKEIEEARKKEREKKAKKDLCKLATN) are a coiled coil. The segment covering 1040–1052 (KKEREKKAKKDLC) has biased composition (basic and acidic residues). Over residues 1067 to 1091 (EPTEDEEENFEEYREGEDESCEAAE) the composition is skewed to acidic residues. The helical transmembrane segment at 1112–1132 (IFSLPLVGLVVISALLWCWWA) threads the bilayer.

In terms of tissue distribution, present at high level in testis (at protein level).

It localises to the cytoplasmic vesicle. The protein resides in the secretory vesicle. It is found in the acrosome membrane. May play a role in acrosome formation in spermatogenesis and in fertilization. This chain is Coiled-coil domain-containing protein 136 (Ccdc136), found in Mus musculus (Mouse).